Reading from the N-terminus, the 113-residue chain is U11-theraphotoxin-Hhn1a (113 aa).

The N-terminal stretch at 1–21 (MNTVRVTFLLVFVLAVSLGQA) is a signal peptide. A propeptide spanning residues 22-74 (DKDENRMEMQEKTEQGKSYLDFAENLLLQKLEELEAKLLEEDSEESRNSRQKR) is cleaved from the precursor. Residues 61-83 (EEDSEESRNSRQKRCIGEGVPCD) are disordered. Intrachain disulfides connect Cys75-Cys90, Cys82-Cys95, and Cys89-Cys110.

The protein belongs to the neurotoxin 14 (magi-1) family. 01 (HNTX-16) subfamily. In terms of tissue distribution, expressed by the venom gland.

Its subcellular location is the secreted. Its function is as follows. Probable ion channel inhibitor. This is U11-theraphotoxin-Hhn1a from Cyriopagopus hainanus (Chinese bird spider).